We begin with the raw amino-acid sequence, 690 residues long: Elongation factor G (690 aa).

The 276-residue stretch at 8 to 283 folds into the tr-type G domain; the sequence is SRCRNIGIMA…AVVDFLPSPS (276 aa). GTP-binding positions include 17 to 24, 81 to 85, and 135 to 138; these read AHIDAGKT, DTPGH, and NKMD.

It belongs to the TRAFAC class translation factor GTPase superfamily. Classic translation factor GTPase family. EF-G/EF-2 subfamily.

Its subcellular location is the cytoplasm. In terms of biological role, catalyzes the GTP-dependent ribosomal translocation step during translation elongation. During this step, the ribosome changes from the pre-translocational (PRE) to the post-translocational (POST) state as the newly formed A-site-bound peptidyl-tRNA and P-site-bound deacylated tRNA move to the P and E sites, respectively. Catalyzes the coordinated movement of the two tRNA molecules, the mRNA and conformational changes in the ribosome. The polypeptide is Elongation factor G (Anaplasma marginale (strain Florida)).